Here is a 176-residue protein sequence, read N- to C-terminus: Ubiquitin-conjugating enzyme E2-20 kDa (176 aa).

A compositionally biased stretch (polar residues) spans 1 to 20 (MDSDMQNQNPHTNSKNSSSA). A disordered region spans residues 1 to 25 (MDSDMQNQNPHTNSKNSSSAGMAVD). Residues 28–175 (SVTKRLRSEL…LMQRYKEIDE (148 aa)) form the UBC core domain. Cysteine 113 functions as the Glycyl thioester intermediate in the catalytic mechanism.

Belongs to the ubiquitin-conjugating enzyme family.

It carries out the reaction S-ubiquitinyl-[E1 ubiquitin-activating enzyme]-L-cysteine + [E2 ubiquitin-conjugating enzyme]-L-cysteine = [E1 ubiquitin-activating enzyme]-L-cysteine + S-ubiquitinyl-[E2 ubiquitin-conjugating enzyme]-L-cysteine.. It functions in the pathway protein modification; protein ubiquitination. In terms of biological role, catalyzes the covalent attachment of ubiquitin to other proteins. This Schizosaccharomyces pombe (strain 972 / ATCC 24843) (Fission yeast) protein is Ubiquitin-conjugating enzyme E2-20 kDa (ubc11).